A 381-amino-acid polypeptide reads, in one-letter code: Cytochrome b (381 aa).

The next 4 membrane-spanning stretches (helical) occupy residues 34-54, 78-99, 114-134, and 179-199; these read FGSL…FLAM, WLIR…YLHI, WNIG…GYVL, and FFAF…IHLL. Heme b-binding residues include His84 and His98. The heme b site is built by His183 and His197. His202 contributes to the a ubiquinone binding site. Transmembrane regions (helical) follow at residues 227–247, 289–309, 321–341, and 348–368; these read YKDL…ALFT, LGGV…PLLH, LTQI…WIGG, and FIMV…IIMP.

It belongs to the cytochrome b family. In terms of assembly, the cytochrome bc1 complex contains 3 respiratory subunits (MT-CYB, CYC1 and UQCRFS1), 2 core proteins (UQCRC1 and UQCRC2) and probably 6 low-molecular weight proteins. Heme b serves as cofactor.

It is found in the mitochondrion inner membrane. Functionally, component of the ubiquinol-cytochrome c reductase complex (complex III or cytochrome b-c1 complex) that is part of the mitochondrial respiratory chain. The b-c1 complex mediates electron transfer from ubiquinol to cytochrome c. Contributes to the generation of a proton gradient across the mitochondrial membrane that is then used for ATP synthesis. The protein is Cytochrome b (mt-cyb) of Negaprion brevirostris (Lemon shark).